Here is a 117-residue protein sequence, read N- to C-terminus: 5-hydroxyisourate hydrolase (117 aa).

Positions 7, 45, and 114 each coordinate substrate.

This sequence belongs to the transthyretin family. 5-hydroxyisourate hydrolase subfamily. As to quaternary structure, homotetramer.

It carries out the reaction 5-hydroxyisourate + H2O = 5-hydroxy-2-oxo-4-ureido-2,5-dihydro-1H-imidazole-5-carboxylate + H(+). In terms of biological role, catalyzes the hydrolysis of 5-hydroxyisourate (HIU) to 2-oxo-4-hydroxy-4-carboxy-5-ureidoimidazoline (OHCU). The chain is 5-hydroxyisourate hydrolase from Ralstonia nicotianae (strain ATCC BAA-1114 / GMI1000) (Ralstonia solanacearum).